Reading from the N-terminus, the 82-residue chain is MKILCIFLTFFFTVSCGPSVPQKKTREVAEKKRECQLVRGACKPECNSWEYVYYYCNVNPCCVVQEYQKPIINKITSKLHQK.

An N-terminal signal peptide occupies residues 1-16; that stretch reads MKILCIFLTFFFTVSC. 3 cysteine pairs are disulfide-bonded: cysteine 35–cysteine 61, cysteine 42–cysteine 56, and cysteine 46–cysteine 62.

It belongs to the beta-defensin family.

It localises to the secreted. Has antibacterial activity. This is Beta-defensin 113 (DEFB113) from Pan troglodytes (Chimpanzee).